Consider the following 687-residue polypeptide: Geranylgeranyl transferase type-2 subunit alpha 2 (687 aa).

PFTA repeat units lie at residues 38–72 (YTKEAIQLSAKLLITNPEFYTAWNYPKLAFESRLD), 83–117 (IIDEELGVVQNALERNVKSYGAWYHRKWVLSKKGH), 132–167 (YQKQAHQKQDDEKQDDPSRNFHAWNYRRFVVELTKT), 168–203 (SEEDELQYTTDMISDISFTIYSAWHYRSVLVSSLVA), and 214–248 (TIRRELDYVHSAIFTLEEKQSGWFYYLWLLDQTVK). 5 LRR repeats span residues 523–545 (MNNIICLRLNNLTLSRIAAVEKL), 546–567 (LFVQMLDLSHNELHSAEGLEAM), 568–591 (QLLCCLNLSHNRIRSFSALDSLRH), 592–616 (LKQLRVLDVSHNHICGELPVDTTRY), and 646–668 (LMKLKQLDIRGNDLIFAGEEFSS).

The protein belongs to the protein prenyltransferase subunit alpha family. As to quaternary structure, heterotrimer composed of the alpha subunit RGTA, the beta subunit RGTB and REP; within this trimer, RGTA and RGTB form the catalytic component, while REP mediates peptide substrate binding.

The catalysed reaction is geranylgeranyl diphosphate + L-cysteinyl-[protein] = S-geranylgeranyl-L-cysteinyl-[protein] + diphosphate. The enzymatic reaction requires the aid of the Rab escort protein REP. Functionally, catalyzes the transfer of a geranylgeranyl moiety from geranylgeranyl diphosphate to both cysteines of Rab proteins with the C-terminal sequence -CCXX, CXXX, -XCCX and -XCXC, such as RABA1A, RABA2A, RABF2A and RABG2. Does not seem to be a functional Rab-GGT alpha subunit in vitro. The polypeptide is Geranylgeranyl transferase type-2 subunit alpha 2 (Arabidopsis thaliana (Mouse-ear cress)).